An 847-amino-acid chain; its full sequence is Leucine--tRNA ligase (847 aa).

A 'HIGH' region motif is present at residues 41 to 51 (PYPSGRIHMGH). A 'KMSKS' region motif is present at residues 619 to 623 (KMSKS). An ATP-binding site is contributed by lysine 622.

This sequence belongs to the class-I aminoacyl-tRNA synthetase family.

The protein resides in the cytoplasm. The enzyme catalyses tRNA(Leu) + L-leucine + ATP = L-leucyl-tRNA(Leu) + AMP + diphosphate. The polypeptide is Leucine--tRNA ligase (Cereibacter sphaeroides (strain KD131 / KCTC 12085) (Rhodobacter sphaeroides)).